The sequence spans 251 residues: Triosephosphate isomerase (251 aa).

A substrate-binding site is contributed by 9 to 11 (NWK). The active-site Electrophile is His-95. Glu-167 serves as the catalytic Proton acceptor. Residues Gly-173, Ser-213, and 234–235 (GG) each bind substrate. The residue at position 213 (Ser-213) is a Phosphoserine.

It belongs to the triosephosphate isomerase family. In terms of assembly, homodimer.

The protein resides in the cytoplasm. The enzyme catalyses D-glyceraldehyde 3-phosphate = dihydroxyacetone phosphate. It functions in the pathway carbohydrate biosynthesis; gluconeogenesis. Its pathway is carbohydrate degradation; glycolysis; D-glyceraldehyde 3-phosphate from glycerone phosphate: step 1/1. Functionally, involved in the gluconeogenesis. Catalyzes stereospecifically the conversion of dihydroxyacetone phosphate (DHAP) to D-glyceraldehyde-3-phosphate (G3P). The sequence is that of Triosephosphate isomerase from Shouchella clausii (strain KSM-K16) (Alkalihalobacillus clausii).